A 188-amino-acid chain; its full sequence is UPF0398 protein OEOE_1093 (188 aa).

It belongs to the UPF0398 family.

This chain is UPF0398 protein OEOE_1093, found in Oenococcus oeni (strain ATCC BAA-331 / PSU-1).